A 520-amino-acid chain; its full sequence is Transactivator/viroplasmin protein (520 aa).

The interval 487–520 (KDASADSGPKDGPPPTRSIVEKEDVPTTSSKQVD) is disordered.

This sequence belongs to the caulimoviridae viroplasmin family.

It is found in the host cytoplasm. Its function is as follows. Enhances the ribosomal termination-reinitiation event leading to the translation of major open reading frames on the polycistronic viral RNAs. This is Transactivator/viroplasmin protein from Arabidopsis thaliana (Mouse-ear cress).